We begin with the raw amino-acid sequence, 631 residues long: Putative ATP-dependent DNA helicase Q1 (631 aa).

The Helicase ATP-binding domain maps to I118–L293. L131 to S138 contributes to the ATP binding site. The short motif at D237–H240 is the DEVH box element. The region spanning C318 to A466 is the Helicase C-terminal domain. Positions 471, 489, 493, and 496 each coordinate Zn(2+). The disordered stretch occupies residues E610 to D631. Positions V622–D631 are enriched in acidic residues.

This sequence belongs to the helicase family. RecQ subfamily. The cofactor is Zn(2+).

It is found in the nucleus. It carries out the reaction Couples ATP hydrolysis with the unwinding of duplex DNA by translocating in the 3'-5' direction.. It catalyses the reaction ATP + H2O = ADP + phosphate + H(+). Functionally, DNA helicase that may play a role in the repair of DNA that is damaged by ultraviolet light or other mutagens. Exhibits a magnesium-dependent ATP-dependent DNA-helicase activity that unwinds single- and double-stranded DNA in a 3'-5' direction. This Caenorhabditis elegans protein is Putative ATP-dependent DNA helicase Q1.